Consider the following 160-residue polypeptide: MPKDVTVESFELDHTIVKAPYVRLISEEVGPKGDIITNFDIRLIQPNENSIDTGGLHTIEHLLAKLIRQRIDGLIDCSPFGCRTGFHMIMWGKQDPTEIAKVIKSSLEAIANEITWEDVPGTTIESCGNYKDHSLHSAKEWAKLILEQGISDQAFERHTV.

Residues His-57, His-61, and Cys-127 each coordinate Fe cation.

Belongs to the LuxS family. In terms of assembly, homodimer. It depends on Fe cation as a cofactor.

It carries out the reaction S-(5-deoxy-D-ribos-5-yl)-L-homocysteine = (S)-4,5-dihydroxypentane-2,3-dione + L-homocysteine. Involved in the synthesis of autoinducer 2 (AI-2) which is secreted by bacteria and is used to communicate both the cell density and the metabolic potential of the environment. The regulation of gene expression in response to changes in cell density is called quorum sensing. Catalyzes the transformation of S-ribosylhomocysteine (RHC) to homocysteine (HC) and 4,5-dihydroxy-2,3-pentadione (DPD). The chain is S-ribosylhomocysteine lyase from Streptococcus thermophilus (strain CNRZ 1066).